Consider the following 99-residue polypeptide: Antitoxin VapB47 (99 aa).

This sequence belongs to the phD/YefM antitoxin family.

In terms of biological role, antitoxin component of a type II toxin-antitoxin (TA) system. This chain is Antitoxin VapB47 (vapB47), found in Mycobacterium tuberculosis (strain CDC 1551 / Oshkosh).